The primary structure comprises 615 residues: Sorting nexin-41 (615 aa).

Residues 1 to 71 (MWNDEDNNPY…DEGDYVGQAN (71 aa)) form a disordered region. Residues 42–53 (SHSSNPDISDFS) show a composition bias toward low complexity. The 118-residue stretch at 93 to 210 (PDMPILITDA…RFLDPNVSWS (118 aa)) folds into the PX domain. Positions 127, 129, 153, and 176 each coordinate a 1,2-diacyl-sn-glycero-3-phospho-(1D-myo-inositol-3-phosphate). Disordered stretches follow at residues 218–277 (ASSV…RFPP) and 432–504 (QYLN…RKTS). Polar residues-rich tracts occupy residues 252–263 (LKSTSGTSSSPN) and 434–446 (LNRT…TKQR). Over residues 447–456 (SLSTSSATSS) the composition is skewed to low complexity.

The protein belongs to the sorting nexin family.

It is found in the endosome membrane. It localises to the endomembrane system. May be required for cytoplasm to vacuole transport (Cvt) and pexophagy. This Emericella nidulans (strain FGSC A4 / ATCC 38163 / CBS 112.46 / NRRL 194 / M139) (Aspergillus nidulans) protein is Sorting nexin-41 (snx41).